The chain runs to 377 residues: Carbamoyl phosphate synthase small chain (377 aa).

Positions 1–186 (MSTPALLVLA…LGKGFVTPDE (186 aa)) are CPSase. Residues Ser-47, Gly-238, and Gly-240 each contribute to the L-glutamine site. In terms of domain architecture, Glutamine amidotransferase type-1 spans 190 to 377 (HVVAYDFGVK…IGNMKAAKRA (188 aa)). Residue Cys-266 is the Nucleophile of the active site. L-glutamine contacts are provided by Leu-267, Gln-270, Asn-308, Gly-310, and Phe-311. Active-site residues include His-350 and Glu-352.

Belongs to the CarA family. Composed of two chains; the small (or glutamine) chain promotes the hydrolysis of glutamine to ammonia, which is used by the large (or ammonia) chain to synthesize carbamoyl phosphate. Tetramer of heterodimers (alpha,beta)4.

The enzyme catalyses hydrogencarbonate + L-glutamine + 2 ATP + H2O = carbamoyl phosphate + L-glutamate + 2 ADP + phosphate + 2 H(+). It carries out the reaction L-glutamine + H2O = L-glutamate + NH4(+). The protein operates within amino-acid biosynthesis; L-arginine biosynthesis; carbamoyl phosphate from bicarbonate: step 1/1. It participates in pyrimidine metabolism; UMP biosynthesis via de novo pathway; (S)-dihydroorotate from bicarbonate: step 1/3. In terms of biological role, small subunit of the glutamine-dependent carbamoyl phosphate synthetase (CPSase). CPSase catalyzes the formation of carbamoyl phosphate from the ammonia moiety of glutamine, carbonate, and phosphate donated by ATP, constituting the first step of 2 biosynthetic pathways, one leading to arginine and/or urea and the other to pyrimidine nucleotides. The small subunit (glutamine amidotransferase) binds and cleaves glutamine to supply the large subunit with the substrate ammonia. This is Carbamoyl phosphate synthase small chain from Neisseria meningitidis serogroup B (strain ATCC BAA-335 / MC58).